We begin with the raw amino-acid sequence, 64 residues long: Putative antitoxin VapB1 (64 aa).

Functionally, possibly the antitoxin component of a type II toxin-antitoxin (TA) system. Its cognate toxin is VapC1 (Potential). The protein is Putative antitoxin VapB1 (vapB1) of Methanocaldococcus jannaschii (strain ATCC 43067 / DSM 2661 / JAL-1 / JCM 10045 / NBRC 100440) (Methanococcus jannaschii).